The sequence spans 290 residues: Carbonic anhydrase-related protein (290 aa).

Residue Ser5 is modified to Phosphoserine. Residues 27 to 289 enclose the Alpha-carbonic anhydrase domain; the sequence is VEWGYEEGVE…LSDRVIRAAF (263 aa). The active-site Proton donor/acceptor is the His87. Residues His118 and His141 each contribute to the Zn(2+) site.

This sequence belongs to the alpha-carbonic anhydrase family.

In terms of biological role, does not have a carbonic anhydrase catalytic activity. This is Carbonic anhydrase-related protein (Ca8) from Rattus norvegicus (Rat).